The sequence spans 534 residues: ATP synthase subunit beta 2 (534 aa).

185 to 192 (GGAGVGKT) lines the ATP pocket. The segment covering 494–505 (AAAREADARREA) has biased composition (basic and acidic residues). Positions 494–534 (AAAREADARREAAAAASGAGPGTTSDPASGSAEPQGARHGR) are disordered.

This sequence belongs to the ATPase alpha/beta chains family. In terms of assembly, F-type ATPases have 2 components, CF(1) - the catalytic core - and CF(0) - the membrane proton channel. CF(1) has five subunits: alpha(3), beta(3), gamma(1), delta(1), epsilon(1). CF(0) has three main subunits: a(1), b(2) and c(9-12). The alpha and beta chains form an alternating ring which encloses part of the gamma chain. CF(1) is attached to CF(0) by a central stalk formed by the gamma and epsilon chains, while a peripheral stalk is formed by the delta and b chains.

The protein localises to the cell inner membrane. The catalysed reaction is ATP + H2O + 4 H(+)(in) = ADP + phosphate + 5 H(+)(out). In terms of biological role, produces ATP from ADP in the presence of a proton gradient across the membrane. The catalytic sites are hosted primarily by the beta subunits. The polypeptide is ATP synthase subunit beta 2 (Burkholderia mallei (strain NCTC 10247)).